Here is a 523-residue protein sequence, read N- to C-terminus: Cysteine-rich secretory protein LCCL domain-containing 1 (523 aa).

Residues 1–23 (MKYVVQEWLRITTLLFIAQAVSA) form the signal peptide. The SCP domain maps to 66-206 (LDLHNKLRGQ…PKAVYLVCNY (141 aa)). Residues 246 to 298 (ERPYSPHEPEEETNEIERQRSKAQDATAQSRPRTHSPSGSTGSEDSEKNEVIS) are disordered. Polar residues predominate over residues 269–288 (QDATAQSRPRTHSPSGSTGS). 2 consecutive LCCL domains span residues 302 to 397 (MSQI…ANSF) and 403 to 505 (TVQA…PGKQ). Intrachain disulfides connect Cys308/Cys326, Cys330/Cys350, Cys409/Cys431, and Cys435/Cys458.

It belongs to the CRISP family.

It is found in the secreted. The polypeptide is Cysteine-rich secretory protein LCCL domain-containing 1 (CRISPLD1) (Gallus gallus (Chicken)).